The sequence spans 80 residues: UPF0248 protein MJ1316 (80 aa).

The protein belongs to the UPF0248 family.

The sequence is that of UPF0248 protein MJ1316 from Methanocaldococcus jannaschii (strain ATCC 43067 / DSM 2661 / JAL-1 / JCM 10045 / NBRC 100440) (Methanococcus jannaschii).